Reading from the N-terminus, the 202-residue chain is Lymphotoxin-alpha (202 aa).

The N-terminal stretch at M1–G33 is a signal peptide. In terms of domain architecture, THD spans P60–L202. N93 carries N-linked (GlcNAc...) asparagine glycosylation.

Belongs to the tumor necrosis factor family. In terms of assembly, homotrimer, and heterotrimer of either two LTB and one LTA subunits or (less prevalent) two LTA and one LTB subunits. Interacts with TNFRSF14.

Its subcellular location is the secreted. It localises to the membrane. Functionally, cytokine that in its homotrimeric form binds to TNFRSF1A/TNFR1, TNFRSF1B/TNFBR and TNFRSF14/HVEM. In its heterotrimeric form with LTB binds to TNFRSF3/LTBR. Lymphotoxin is produced by lymphocytes and is cytotoxic for a wide range of tumor cells in vitro and in vivo. The sequence is that of Lymphotoxin-alpha (Lta) from Rattus norvegicus (Rat).